The sequence spans 445 residues: tRNA modification GTPase MnmE (445 aa).

Residues arginine 20, glutamate 79, and lysine 119 each coordinate (6S)-5-formyl-5,6,7,8-tetrahydrofolate. In terms of domain architecture, TrmE-type G spans 215-371 (GLKLAIIGPP…ILKNIENIAE (157 aa)). Asparagine 225 lines the K(+) pocket. Residues 225–230 (NVGKSS), 244–250 (SNIAGTT), and 269–272 (DTAG) each bind GTP. Serine 229 lines the Mg(2+) pocket. K(+) is bound by residues serine 244, isoleucine 246, and threonine 249. Threonine 250 lines the Mg(2+) pocket. Residue lysine 445 coordinates (6S)-5-formyl-5,6,7,8-tetrahydrofolate.

This sequence belongs to the TRAFAC class TrmE-Era-EngA-EngB-Septin-like GTPase superfamily. TrmE GTPase family. Homodimer. Heterotetramer of two MnmE and two MnmG subunits. K(+) is required as a cofactor.

The protein resides in the cytoplasm. Functionally, exhibits a very high intrinsic GTPase hydrolysis rate. Involved in the addition of a carboxymethylaminomethyl (cmnm) group at the wobble position (U34) of certain tRNAs, forming tRNA-cmnm(5)s(2)U34. This is tRNA modification GTPase MnmE from Rickettsia conorii (strain ATCC VR-613 / Malish 7).